The following is an 868-amino-acid chain: Leucine--tRNA ligase (868 aa).

The 'HIGH' region motif lies at 42–52 (PYPSGKLHMGH). Positions 627–631 (KMSKS) match the 'KMSKS' region motif. Residue Lys-630 coordinates ATP.

Belongs to the class-I aminoacyl-tRNA synthetase family.

It localises to the cytoplasm. It carries out the reaction tRNA(Leu) + L-leucine + ATP = L-leucyl-tRNA(Leu) + AMP + diphosphate. This is Leucine--tRNA ligase from Pseudomonas putida (strain ATCC 700007 / DSM 6899 / JCM 31910 / BCRC 17059 / LMG 24140 / F1).